A 103-amino-acid polypeptide reads, in one-letter code: Large ribosomal subunit protein bL21 (103 aa).

It belongs to the bacterial ribosomal protein bL21 family. As to quaternary structure, part of the 50S ribosomal subunit. Contacts protein L20.

Functionally, this protein binds to 23S rRNA in the presence of protein L20. The polypeptide is Large ribosomal subunit protein bL21 (Thiobacillus denitrificans (strain ATCC 25259 / T1)).